We begin with the raw amino-acid sequence, 257 residues long: Homeobox protein goosecoid (257 aa).

A DNA-binding region (homeobox) is located at residues 160–219 (KRRHRTIFTDEQLEALENLFQETKYPDVGTREQLARKVHLREEKVEVWFKNRRAKWRRQK). Positions 213 to 257 (AKWRRQKRSSSEESENAEKWNKTSSSKASPEKREEEGKSDLDSDS) are disordered. The segment covering 241–257 (SPEKREEEGKSDLDSDS) has biased composition (basic and acidic residues).

This sequence belongs to the paired homeobox family. Bicoid subfamily.

The protein localises to the nucleus. Regulates chordin (CHRD). May play a role in spatial programing within discrete embryonic fields or lineage compartments during organogenesis. In concert with NKX3-2, plays a role in defining the structural components of the middle ear; required for the development of the entire tympanic ring. Probably involved in the regulatory networks that define neural crest cell fate specification and determine mesoderm cell lineages in mammals. The polypeptide is Homeobox protein goosecoid (GSC) (Pongo pygmaeus (Bornean orangutan)).